The chain runs to 65 residues: UPF0434 protein BRADO0313 (65 aa).

It belongs to the UPF0434 family.

The sequence is that of UPF0434 protein BRADO0313 from Bradyrhizobium sp. (strain ORS 278).